Consider the following 144-residue polypeptide: Putative pre-16S rRNA nuclease (144 aa).

It belongs to the YqgF nuclease family.

It localises to the cytoplasm. Functionally, could be a nuclease involved in processing of the 5'-end of pre-16S rRNA. The chain is Putative pre-16S rRNA nuclease from Pseudomonas paraeruginosa (strain DSM 24068 / PA7) (Pseudomonas aeruginosa (strain PA7)).